The following is a 428-amino-acid chain: Kynureninase (428 aa).

Residues Thr-104, Thr-105, 132–135, Asp-213, His-216, and Tyr-238 contribute to the pyridoxal 5'-phosphate site; that span reads FPSD. Position 239 is an N6-(pyridoxal phosphate)lysine (Lys-239). Trp-267 and Thr-295 together coordinate pyridoxal 5'-phosphate.

The protein belongs to the kynureninase family. Homodimer. The cofactor is pyridoxal 5'-phosphate.

The enzyme catalyses L-kynurenine + H2O = anthranilate + L-alanine + H(+). It carries out the reaction 3-hydroxy-L-kynurenine + H2O = 3-hydroxyanthranilate + L-alanine + H(+). The protein operates within amino-acid degradation; L-kynurenine degradation; L-alanine and anthranilate from L-kynurenine: step 1/1. Its pathway is cofactor biosynthesis; NAD(+) biosynthesis; quinolinate from L-kynurenine: step 2/3. Catalyzes the cleavage of L-kynurenine (L-Kyn) and L-3-hydroxykynurenine (L-3OHKyn) into anthranilic acid (AA) and 3-hydroxyanthranilic acid (3-OHAA), respectively. The chain is Kynureninase from Bacillus thuringiensis subsp. konkukian (strain 97-27).